The sequence spans 234 residues: Sperm-associated microtubule inner protein 5 (234 aa).

Microtubule inner protein component of sperm flagellar doublet microtubules. Expressed in testis (at protein level). Strongly expressed in peritubular cells and Leydig cells and weakly expressed in the cytoplasm of spermatocytes.

It is found in the cytoplasm. Its subcellular location is the cytoskeleton. It localises to the flagellum axoneme. The protein localises to the nucleus. Functionally, microtubule inner protein (MIP) part of the dynein-decorated doublet microtubules (DMTs) in flagellum axoneme. May serve to reinforce and thus stabilize the microtubule structure in the sperm flagella. The polypeptide is Sperm-associated microtubule inner protein 5 (Homo sapiens (Human)).